Consider the following 377-residue polypeptide: MTHPIRKTHPVIKIMNTALIDLPAPINISAWWNFGFLLGMCLSIQIFTGLFLSMHYIPHIDLAFSSVSHICRDVNFGWLLRVLHANGGSMFFICLYIHIARGIYYSSFHLYFTWMTGVVLLILVMATAFLGYVLPWGQMSFWGATVITNLISAVPYVGSMMVQWLWGGFSVDNATLTRFFTLHFILPFVVLAMVAIHLLFLHQTGSNNPLGLNSNAEKIPFHPYFTIKDLFGVVVMVWLLMILVLSGPYLLSDPDNFIPANPLVTPTHIQPEWYFLFAYAILRSIPNKLGGVVALLASVVILIILPLYKNKFMSSSFYPLNQMLFWGFISIFILLTWIGAQAIEEPFYTSAQILTSLYFFYFILSPLLSVLWDYVME.

Transmembrane regions (helical) follow at residues 34-54, 78-100, 113-133, and 179-199; these read FGFL…FLSM, WLLR…IHIA, TWMT…LGYV, and FFTL…IHLL. Heme b-binding residues include histidine 84 and histidine 98. Residues histidine 183 and histidine 197 each contribute to the heme b site. Histidine 202 provides a ligand contact to a ubiquinone. Helical transmembrane passes span 225-245, 288-308, 323-343, and 352-372; these read FTIK…ILVL, KLGG…LPLY, MLFW…AQAI, and QILT…SVLW.

This sequence belongs to the cytochrome b family. In terms of assembly, the main subunits of complex b-c1 are: cytochrome b, cytochrome c1 and the Rieske protein. Requires heme b as cofactor.

The protein resides in the mitochondrion inner membrane. In terms of biological role, component of the ubiquinol-cytochrome c reductase complex (complex III or cytochrome b-c1 complex) that is part of the mitochondrial respiratory chain. The b-c1 complex mediates electron transfer from ubiquinol to cytochrome c. Contributes to the generation of a proton gradient across the mitochondrial membrane that is then used for ATP synthesis. This Priapulus caudatus (Priapulid worm) protein is Cytochrome b (mt:Cyt-b).